The primary structure comprises 285 residues: Tetraspanin-3 (285 aa).

Over 1–6 (MRTSNH) the chain is Cytoplasmic. A helical transmembrane segment spans residues 7–27 (LIGLVNFLTFLLSIPILGGGI). Topologically, residues 28–43 (WLSSRANSTDCLRFLQ) are extracellular. N-linked (GlcNAc...) asparagine glycosylation occurs at Asn-34. The chain crosses the membrane as a helical span at residues 44-64 (WPLIVIGISIMVVSLAGFAGA). The Cytoplasmic portion of the chain corresponds to 65–71 (CYRNKFL). The helical transmembrane segment at 72-92 (MWLYLVVMLLIIAALIGFIIF) threads the bilayer. Topologically, residues 93 to 235 (AYAVTDKGSG…LGSLKKSWRK (143 aa)) are extracellular. A glycan (N-linked (GlcNAc...) asparagine) is linked at Asn-187. The chain crosses the membrane as a helical span at residues 236-256 (VSVINIVVLIILVIFYVIAYA). Residues 257–285 (AYRNVKRIDNDEPAGEARMTKSHPSHFHL) lie on the Cytoplasmic side of the membrane.

It belongs to the tetraspanin (TM4SF) family.

The protein localises to the cell membrane. Its function is as follows. May be involved in the regulation of cell differentiation. This chain is Tetraspanin-3 (TET3), found in Arabidopsis thaliana (Mouse-ear cress).